Reading from the N-terminus, the 164-residue chain is Aphid transmission protein (164 aa).

Belongs to the caulimoviridae ORF II family.

This protein is involved in virus transmission. The chain is Aphid transmission protein from Scrophularia californica (California bee plant).